Consider the following 104-residue polypeptide: Large ribosomal subunit protein uL24 (104 aa).

It belongs to the universal ribosomal protein uL24 family. Part of the 50S ribosomal subunit.

Functionally, one of two assembly initiator proteins, it binds directly to the 5'-end of the 23S rRNA, where it nucleates assembly of the 50S subunit. Its function is as follows. One of the proteins that surrounds the polypeptide exit tunnel on the outside of the subunit. This Shigella dysenteriae serotype 1 (strain Sd197) protein is Large ribosomal subunit protein uL24.